The sequence spans 919 residues: Phosphoenolpyruvate carboxylase (919 aa).

Catalysis depends on residues His138 and Lys579.

Belongs to the PEPCase type 1 family. The cofactor is Mg(2+).

The catalysed reaction is oxaloacetate + phosphate = phosphoenolpyruvate + hydrogencarbonate. Its function is as follows. Forms oxaloacetate, a four-carbon dicarboxylic acid source for the tricarboxylic acid cycle. In Corynebacterium efficiens (strain DSM 44549 / YS-314 / AJ 12310 / JCM 11189 / NBRC 100395), this protein is Phosphoenolpyruvate carboxylase (ppc).